The sequence spans 268 residues: uncharacterized protein (268 aa).

Residues 132–159 (DELDEKIIEFDTKMNEILEELLEDVEVE) adopt a coiled-coil conformation.

This is an uncharacterized protein from Methanocaldococcus jannaschii (strain ATCC 43067 / DSM 2661 / JAL-1 / JCM 10045 / NBRC 100440) (Methanococcus jannaschii).